A 193-amino-acid polypeptide reads, in one-letter code: A-type ATP synthase subunit E (193 aa).

Belongs to the V-ATPase E subunit family. Has multiple subunits with at least A(3), B(3), C, D, E, F, H, I and proteolipid K(x).

It localises to the cell membrane. Functionally, component of the A-type ATP synthase that produces ATP from ADP in the presence of a proton gradient across the membrane. This is A-type ATP synthase subunit E from Haloquadratum walsbyi (strain DSM 16790 / HBSQ001).